The primary structure comprises 282 residues: Acetyl-coenzyme A carboxylase carboxyl transferase subunit beta (282 aa).

The CoA carboxyltransferase N-terminal domain occupies G26–H282.

The protein belongs to the AccD/PCCB family. As to quaternary structure, acetyl-CoA carboxylase is a heterohexamer composed of biotin carboxyl carrier protein (AccB), biotin carboxylase (AccC) and two subunits each of ACCase subunit alpha (AccA) and ACCase subunit beta (AccD).

The protein resides in the cytoplasm. The enzyme catalyses N(6)-carboxybiotinyl-L-lysyl-[protein] + acetyl-CoA = N(6)-biotinyl-L-lysyl-[protein] + malonyl-CoA. The protein operates within lipid metabolism; malonyl-CoA biosynthesis; malonyl-CoA from acetyl-CoA: step 1/1. In terms of biological role, component of the acetyl coenzyme A carboxylase (ACC) complex. Biotin carboxylase (BC) catalyzes the carboxylation of biotin on its carrier protein (BCCP) and then the CO(2) group is transferred by the transcarboxylase to acetyl-CoA to form malonyl-CoA. This Flavobacteriaceae bacterium (strain 3519-10) protein is Acetyl-coenzyme A carboxylase carboxyl transferase subunit beta.